The following is a 124-amino-acid chain: Protein MGF 110-4L (124 aa).

Residues 1–28 (MLVIFLGILGLLANQVLGLPIQAGGHLC) form the signal peptide. A glycan (N-linked (GlcNAc...) asparagine; by host) is linked at Asn64. A Prevents secretion from ER motif is present at residues 121 to 124 (KEDL).

It belongs to the asfivirus MGF 110 family.

It is found in the virion. The protein localises to the host endoplasmic reticulum-Golgi intermediate compartment. In terms of biological role, causes the redistribution of lumenal ER protein to an enlarged ERGIC compartment. This chain is Protein MGF 110-4L, found in Ornithodoros (relapsing fever ticks).